Consider the following 801-residue polypeptide: Na(+)/H(+) antiporter subunit A1 (801 aa).

21 consecutive transmembrane segments (helical) span residues 4-25, 30-49, 79-101, 108-127, 131-153, 166-188, 208-230, 243-265, 270-289, 302-324, 339-361, 373-395, 429-451, 472-494, 526-548, 589-611, 621-641, 646-668, 672-694, 707-729, and 767-784; these read LHIA…YRFF, LGWF…LTLI, LGLL…SIGY, LGNF…GVVL, VIIL…SFWR, LIIT…IPTQ, FIFA…PFYI, SAYL…MTPI, QGWV…WASL, AFST…ISYH, AAIF…TGAV, LGGL…LSMA, YLFP…KFIM, ILML…FPGI, AFLS…SYWV, NNLV…SVPF, IRIF…LILF, LFSI…FFKA, ALTQ…YHLP, LTNA…IAYG, and LFES…YTMI.

The protein belongs to the CPA3 antiporters (TC 2.A.63) subunit A family. As to quaternary structure, may form a heterooligomeric complex that consists of seven subunits: mnhA1, mnhB1, mnhC1, mnhD1, mnhE1, mnhF1 and mnhG1.

It is found in the cell membrane. Its activity is regulated as follows. Na(+) extrusion is completely inhibited by the H(+) conductor carbonyl cyanide m-chlorophenylhydrazone (CCCP). Its function is as follows. Mnh complex is a Na(+)Li(+)/H(+) antiporter involved in Na(+) and/or Li(+) excretion. Na(+)/H(+) antiport consumes a transmembrane electrical potential, and is thus inferred to be electrogenic. Does not transport K(+), Ca(2+) or Mg(2+). This is Na(+)/H(+) antiporter subunit A1 (mnhA1) from Staphylococcus aureus.